The chain runs to 183 residues: Capsid protein (183 aa).

Residues 136–183 (NAPILSTLPETTVVRRRGRSPRRRTPSPRRRRSQSPRRRRSQSRESQC) are disordered. Over residues 149–176 (VRRRGRSPRRRTPSPRRRRSQSPRRRRS) the composition is skewed to basic residues. Residues Ser-155, Ser-162, and Ser-170 each carry the phosphoserine; by host modification. Residues 155-161 (SPRRRTP) form a 1; half-length repeat. The 3 X 8 AA repeats of S-P-R-R-R-[PR]-S-Q stretch occupies residues 155 to 177 (SPRRRTPSPRRRRSQSPRRRRSQ). A Bipartite nuclear localization signal motif is present at residues 158 to 175 (RRTPSPRRRRSQSPRRRR). 2 repeat units span residues 162–169 (SPRRRRSQ) and 170–177 (SPRRRRSQ). The segment at 177–183 (QSRESQC) is RNA binding.

This sequence belongs to the orthohepadnavirus core antigen family. Homodimerizes, then multimerizes. Interacts with cytosol exposed regions of viral L glycoprotein present in the reticulum-to-Golgi compartment. Interacts with human FLNB. Phosphorylated form interacts with host importin alpha; this interaction depends on the exposure of the NLS, which itself depends upon genome maturation and/or phosphorylation of the capsid protein. Interacts with host NUP153. Post-translationally, phosphorylated by host SRPK1, SRPK2, and maybe protein kinase C or GAPDH. Phosphorylation is critical for pregenomic RNA packaging. Protein kinase C phosphorylation is stimulated by HBx protein and may play a role in transport of the viral genome to the nucleus at the late step during the viral replication cycle.

Its subcellular location is the virion. The protein resides in the host cytoplasm. Its function is as follows. Self assembles to form an icosahedral capsid. Most capsids appear to be large particles with an icosahedral symmetry of T=4 and consist of 240 copies of capsid protein, though a fraction forms smaller T=3 particles consisting of 180 capsid proteins. Entering capsids are transported along microtubules to the nucleus. Phosphorylation of the capsid is thought to induce exposure of nuclear localization signal in the C-terminal portion of the capsid protein that allows binding to the nuclear pore complex via the importin (karyopherin-) alpha and beta. Capsids are imported in intact form through the nuclear pore into the nuclear basket, where it probably binds NUP153. Only capsids that contain the mature viral genome can release the viral DNA and capsid protein into the nucleoplasm. Immature capsids get stuck in the basket. Capsids encapsulate the pre-genomic RNA and the P protein. Pre-genomic RNA is reverse-transcribed into DNA while the capsid is still in the cytoplasm. The capsid can then either be directed to the nucleus, providing more genomes for transcription, or bud through the endoplasmic reticulum to provide new virions. The protein is Capsid protein of Homo sapiens (Human).